A 371-amino-acid chain; its full sequence is Putative glutamate--cysteine ligase 2 (371 aa).

This sequence belongs to the glutamate--cysteine ligase type 2 family. YbdK subfamily.

The enzyme catalyses L-cysteine + L-glutamate + ATP = gamma-L-glutamyl-L-cysteine + ADP + phosphate + H(+). Its function is as follows. ATP-dependent carboxylate-amine ligase which exhibits weak glutamate--cysteine ligase activity. The sequence is that of Putative glutamate--cysteine ligase 2 from Paraburkholderia xenovorans (strain LB400).